A 651-amino-acid chain; its full sequence is Protein SCARECROW 1 (651 aa).

Disordered stretches follow at residues 1–33 (MGSSSLLLFPSSSSSATHSSYSPSSSSHAITSL) and 188–277 (SDPA…KQRD). Pro residues predominate over residues 190 to 228 (PAPPPPPPPSHPALLPPDATAPPPPPTSVAALPPPPPPQ). The stretch at 253-280 (TAEETAAAAAAAKERKEEQRRKQRDEEG) forms a coiled coil. Residues 254-263 (AEETAAAAAA) are compositionally biased toward low complexity. The span at 264–277 (AKERKEEQRRKQRD) shows a compositional bias: basic and acidic residues. The GRAS domain maps to 274–644 (KQRDEEGLHL…LCLLTASAWR (371 aa)). The leucine repeat I (LRI) stretch occupies residues 281–345 (LHLLTLLLQC…VSSCLGLYAP (65 aa)). A LxCxE motif motif is present at residues 288-292 (LQCAE). Positions 364-429 (FQVFNGISPF…GGPPRVRLTG (66 aa)) are VHIID. Positions 395 to 399 (VHIID) match the VHIID motif. Residues 439 to 471 (ATGKRLSDFADTLGLPFEFCPVADKAGNLDPEK) are leucine repeat II (LRII). The interval 480–567 (VAVHWLRHSL…QQLLSREIRN (88 aa)) is PFYRE. An SAW region spans residues 570 to 644 (AVGGPARTGD…LCLLTASAWR (75 aa)).

This sequence belongs to the GRAS family. In terms of assembly, interacts with SHR1, but not with SHR2. In terms of tissue distribution, expressed in the initial daughter cell before its asymmetric division and remains expressed in the endodermal cell layer after the division.

It localises to the nucleus. Functionally, transcription factor required for quiescent center cells specification and maintenance of surrounding stem cells, and for the asymmetric cell division involved in radial pattern formation in roots. Essential for cell division but not differentiation of the ground tissue. Regulates the radial organization of the shoot axial organs. Restricts SHR movment and sequesters it into the nucleus of the endodermis. This is Protein SCARECROW 1 (SCR1) from Oryza sativa subsp. japonica (Rice).